Here is a 337-residue protein sequence, read N- to C-terminus: Thiazole synthase (337 aa).

The disordered stretch occupies residues Met-1–Ala-41. The span at Gly-10 to Gly-25 shows a compositional bias: low complexity. Residues Leu-26–Ala-41 are compositionally biased toward gly residues. Lys-144 (schiff-base intermediate with DXP) is an active-site residue. Residues Gly-205, Ala-231–Gly-232, and Asn-253–Thr-254 contribute to the 1-deoxy-D-xylulose 5-phosphate site. The segment at Phe-302–Arg-337 is disordered. Positions Val-319–Arg-337 are enriched in low complexity.

This sequence belongs to the ThiG family. In terms of assembly, homotetramer. Forms heterodimers with either ThiH or ThiS.

The protein localises to the cytoplasm. The catalysed reaction is [ThiS sulfur-carrier protein]-C-terminal-Gly-aminoethanethioate + 2-iminoacetate + 1-deoxy-D-xylulose 5-phosphate = [ThiS sulfur-carrier protein]-C-terminal Gly-Gly + 2-[(2R,5Z)-2-carboxy-4-methylthiazol-5(2H)-ylidene]ethyl phosphate + 2 H2O + H(+). It participates in cofactor biosynthesis; thiamine diphosphate biosynthesis. Functionally, catalyzes the rearrangement of 1-deoxy-D-xylulose 5-phosphate (DXP) to produce the thiazole phosphate moiety of thiamine. Sulfur is provided by the thiocarboxylate moiety of the carrier protein ThiS. In vitro, sulfur can be provided by H(2)S. The polypeptide is Thiazole synthase (Frankia casuarinae (strain DSM 45818 / CECT 9043 / HFP020203 / CcI3)).